A 246-amino-acid polypeptide reads, in one-letter code: 1-(5-phosphoribosyl)-5-[(5-phosphoribosylamino)methylideneamino] imidazole-4-carboxamide isomerase (246 aa).

Residue aspartate 8 is the Proton acceptor of the active site. The active-site Proton donor is aspartate 131.

Belongs to the HisA/HisF family.

The protein localises to the cytoplasm. The catalysed reaction is 1-(5-phospho-beta-D-ribosyl)-5-[(5-phospho-beta-D-ribosylamino)methylideneamino]imidazole-4-carboxamide = 5-[(5-phospho-1-deoxy-D-ribulos-1-ylimino)methylamino]-1-(5-phospho-beta-D-ribosyl)imidazole-4-carboxamide. The protein operates within amino-acid biosynthesis; L-histidine biosynthesis; L-histidine from 5-phospho-alpha-D-ribose 1-diphosphate: step 4/9. This is 1-(5-phosphoribosyl)-5-[(5-phosphoribosylamino)methylideneamino] imidazole-4-carboxamide isomerase from Lactococcus lactis subsp. cremoris (strain MG1363).